Consider the following 304-residue polypeptide: Porphobilinogen deaminase (304 aa).

Cys-239 is modified (S-(dipyrrolylmethanemethyl)cysteine).

Belongs to the HMBS family. As to quaternary structure, monomer. Dipyrromethane is required as a cofactor.

The enzyme catalyses 4 porphobilinogen + H2O = hydroxymethylbilane + 4 NH4(+). It functions in the pathway porphyrin-containing compound metabolism; protoporphyrin-IX biosynthesis; coproporphyrinogen-III from 5-aminolevulinate: step 2/4. Tetrapolymerization of the monopyrrole PBG into the hydroxymethylbilane pre-uroporphyrinogen in several discrete steps. The protein is Porphobilinogen deaminase of Brucella ovis (strain ATCC 25840 / 63/290 / NCTC 10512).